A 425-amino-acid polypeptide reads, in one-letter code: Serine--tRNA ligase (425 aa).

233-235 (TAE) contributes to the L-serine binding site. 264–266 (RRE) is an ATP binding site. Glutamate 287 serves as a coordination point for L-serine. 351-354 (EISS) is a binding site for ATP. Serine 385 provides a ligand contact to L-serine.

It belongs to the class-II aminoacyl-tRNA synthetase family. Type-1 seryl-tRNA synthetase subfamily. Homodimer. The tRNA molecule binds across the dimer.

The protein resides in the cytoplasm. It carries out the reaction tRNA(Ser) + L-serine + ATP = L-seryl-tRNA(Ser) + AMP + diphosphate + H(+). The enzyme catalyses tRNA(Sec) + L-serine + ATP = L-seryl-tRNA(Sec) + AMP + diphosphate + H(+). It participates in aminoacyl-tRNA biosynthesis; selenocysteinyl-tRNA(Sec) biosynthesis; L-seryl-tRNA(Sec) from L-serine and tRNA(Sec): step 1/1. Functionally, catalyzes the attachment of serine to tRNA(Ser). Is also able to aminoacylate tRNA(Sec) with serine, to form the misacylated tRNA L-seryl-tRNA(Sec), which will be further converted into selenocysteinyl-tRNA(Sec). The chain is Serine--tRNA ligase from Synechococcus sp. (strain CC9605).